We begin with the raw amino-acid sequence, 24 residues long: Humanin-like 12 (24 aa).

The protein belongs to the humanin family.

The protein resides in the secreted. Its subcellular location is the cytoplasm. In terms of biological role, plays a role as a neuroprotective and antiapoptotic factor. This is Humanin-like 12 from Homo sapiens (Human).